Here is a 316-residue protein sequence, read N- to C-terminus: Phospholipase A1 2 (316 aa).

A signal peptide spans 1-4 (ADDL). Positions 5–14 (TTLRNGTLDR) are excised as a propeptide. An intrachain disulfide couples C20 to C103. Catalysis depends on S153, which acts as the Nucleophile. The active-site Charge relay system is D181. 2 cysteine pairs are disulfide-bonded: C192-C197 and C235-C240. H242 (charge relay system) is an active-site residue. Cystine bridges form between C257-C284, C258-C309, and C277-C282.

Belongs to the AB hydrolase superfamily. Lipase family. As to expression, expressed by the venom gland.

It is found in the secreted. It catalyses the reaction a 1,2-diacyl-sn-glycero-3-phosphocholine + H2O = a 2-acyl-sn-glycero-3-phosphocholine + a fatty acid + H(+). In terms of biological role, catalyzes the hydrolysis of phosphatidylcholine with phospholipase A1 activity. May act as an allergen and induce hemolytic activity. The sequence is that of Phospholipase A1 2 from Polistes dominula (European paper wasp).